Reading from the N-terminus, the 1454-residue chain is Mediator of RNA polymerase II transcription subunit 14 (1454 aa).

The segment at 1-34 (MAPVQLENHQLVPPGGGGGGSGGPPSAPAPPPPG) is disordered. The span at 14–23 (PGGGGGGSGG) shows a compositional bias: gly residues. The segment covering 25–34 (PSAPAPPPPG) has biased composition (pro residues). Residues 69–73 (LTDLL) carry the LXXLL motif 1 motif. Residues 188–566 (KQATLHQLNQ…VPNKPTQLSY (379 aa)) are interaction with STAT2. The tract at residues 500–824 (LGQQRCKQSI…TKGSSISIQW (325 aa)) is interaction with SREBF1. Phosphoserine is present on residues Ser-617 and Ser-986. Residues 973-1167 (ARRRSVNEDD…MPPPRKLPQR (195 aa)) are disordered. Positions 1001-1011 (QPPPQQQPFPK) are enriched in pro residues. Composition is skewed to polar residues over residues 1024 to 1054 (PPTSYHSTVNQSPSMMHTQSPGNLHAASSPS) and 1092 to 1101 (DPSSPYTMVS). A phosphoserine mark is found at Ser-1112, Ser-1119, Ser-1128, Ser-1136, and Ser-1144. Polar residues predominate over residues 1147 to 1156 (AGTSSQTMPT). The short motif at 1182 to 1186 (LNILL) is the LXXLL motif 2 element.

Belongs to the Mediator complex subunit 14 family. In terms of assembly, interacts with GATA1. Component of the Mediator complex, which is composed of MED1, MED4, MED6, MED7, MED8, MED9, MED10, MED11, MED12, MED13, MED13L, MED14, MED15, MED16, MED17, MED18, MED19, MED20, MED21, MED22, MED23, MED24, MED25, MED26, MED27, MED29, MED30, MED31, CCNC, CDK8 and CDC2L6/CDK11. The MED12, MED13, CCNC and CDK8 subunits form a distinct module termed the CDK8 module. Mediator containing the CDK8 module is less active than Mediator lacking this module in supporting transcriptional activation. Individual preparations of the Mediator complex lacking one or more distinct subunits have been variously termed ARC, CRSP, DRIP, PC2, SMCC and TRAP. Interacts with AR, ESR1, SREBF1 and STAT2. In terms of tissue distribution, ubiquitous.

The protein localises to the nucleus. Functionally, component of the Mediator complex, a coactivator involved in the regulated transcription of nearly all RNA polymerase II-dependent genes. Mediator functions as a bridge to convey information from gene-specific regulatory proteins to the basal RNA polymerase II transcription machinery. Mediator is recruited to promoters by direct interactions with regulatory proteins and serves as a scaffold for the assembly of a functional preinitiation complex with RNA polymerase II and the general transcription factors. In Homo sapiens (Human), this protein is Mediator of RNA polymerase II transcription subunit 14 (MED14).